Here is a 276-residue protein sequence, read N- to C-terminus: Large ribosomal subunit protein uL2 (276 aa).

Disordered stretches follow at residues 1–20 (MGIK…TTND) and 219–276 (TVRG…RRKK). Over residues 7–20 (NPTTNGRRNMTTND) the composition is skewed to polar residues.

It belongs to the universal ribosomal protein uL2 family. In terms of assembly, part of the 50S ribosomal subunit. Forms a bridge to the 30S subunit in the 70S ribosome.

In terms of biological role, one of the primary rRNA binding proteins. Required for association of the 30S and 50S subunits to form the 70S ribosome, for tRNA binding and peptide bond formation. It has been suggested to have peptidyltransferase activity; this is somewhat controversial. Makes several contacts with the 16S rRNA in the 70S ribosome. The protein is Large ribosomal subunit protein uL2 of Bacillus mycoides (strain KBAB4) (Bacillus weihenstephanensis).